The primary structure comprises 41 residues: Large ribosomal subunit protein bL36 (41 aa).

This sequence belongs to the bacterial ribosomal protein bL36 family.

This is Large ribosomal subunit protein bL36 from Bartonella henselae (strain ATCC 49882 / DSM 28221 / CCUG 30454 / Houston 1) (Rochalimaea henselae).